Here is a 329-residue protein sequence, read N- to C-terminus: GTPase Obg (329 aa).

The 159-residue stretch at 1–159 (MQFIDYAEIE…RWLRLELKLL (159 aa)) folds into the Obg domain. One can recognise an OBG-type G domain in the interval 160 to 328 (AEVGIIGLPN…LLQIVWQLLD (169 aa)). Residues 166-173 (GLPNAGKS), 191-195 (FTTLV), 213-216 (DIPG), 280-283 (NKMD), and 309-311 (SGV) contribute to the GTP site. Residues Ser173 and Thr193 each coordinate Mg(2+).

This sequence belongs to the TRAFAC class OBG-HflX-like GTPase superfamily. OBG GTPase family. As to quaternary structure, monomer. Requires Mg(2+) as cofactor.

The protein resides in the cytoplasm. An essential GTPase which binds GTP, GDP and possibly (p)ppGpp with moderate affinity, with high nucleotide exchange rates and a fairly low GTP hydrolysis rate. Plays a role in control of the cell cycle, stress response, ribosome biogenesis and in those bacteria that undergo differentiation, in morphogenesis control. This chain is GTPase Obg, found in Rippkaea orientalis (strain PCC 8801 / RF-1) (Cyanothece sp. (strain PCC 8801)).